A 1040-amino-acid polypeptide reads, in one-letter code: Tudor domain-containing protein 5 (1040 aa).

HTH OST-type domains lie at 7-80, 122-197, and 291-365; these read IQDC…KAIP, VPPI…LKKS, and VDPE…FDAD. The region spanning 533–592 is the Tudor domain; the sequence is FIQPGHLCCVKISEDKWWYRVIIHRILGKKEVEVFYPDFGNIGTVQKSSLRFLKCCYTKL. At S809 the chain carries Phosphoserine. Disordered stretches follow at residues 857–891 and 912–975; these read DVKGGIHTPEGPIAQEKNTSTTRIQQQPDLQYPLD and AERS…AKDK. Composition is skewed to polar residues over residues 872 to 891 and 912 to 924; these read EKNTSTTRIQQQPDLQYPLD and AERSQSEPASIQT. S943 is modified (phosphoserine). A compositionally biased stretch (polar residues) spans 946–956; it reads NHSGSVESSPG. Over residues 958–975 the composition is skewed to basic and acidic residues; that stretch reads LKKEDVSNSRAEATAKDK.

Belongs to the TDRD5 family. Gonad-specific. Mainly expressed in testis. Present at low level in ovary (at protein level).

The protein localises to the cytoplasm. Functionally, required during spermiogenesis to participate in the repression transposable elements and prevent their mobilization, which is essential for the germline integrity. Probably acts via the piRNA metabolic process, which mediates the repression of transposable elements during meiosis by forming complexes composed of piRNAs and Piwi proteins and govern the methylation and subsequent repression of transposons. Required for chromatoid body (CB) assembly. The polypeptide is Tudor domain-containing protein 5 (Tdrd5) (Mus musculus (Mouse)).